Reading from the N-terminus, the 124-residue chain is Holo-[acyl-carrier-protein] synthase (124 aa).

Mg(2+) is bound by residues Asp8 and Glu56.

The protein belongs to the P-Pant transferase superfamily. AcpS family. Mg(2+) serves as cofactor.

It localises to the cytoplasm. The enzyme catalyses apo-[ACP] + CoA = holo-[ACP] + adenosine 3',5'-bisphosphate + H(+). Functionally, transfers the 4'-phosphopantetheine moiety from coenzyme A to a Ser of acyl-carrier-protein. The polypeptide is Holo-[acyl-carrier-protein] synthase (Maridesulfovibrio salexigens (strain ATCC 14822 / DSM 2638 / NCIMB 8403 / VKM B-1763) (Desulfovibrio salexigens)).